Reading from the N-terminus, the 521-residue chain is Solute carrier family 35 member F4 (521 aa).

A run of 10 helical transmembrane segments spans residues methionine 160–glycine 180, phenylalanine 192–valine 212, phenylalanine 248–tyrosine 266, aspartate 277–leucine 297, phenylalanine 301–tyrosine 321, isoleucine 330–phenylalanine 350, phenylalanine 365–tyrosine 385, phenylalanine 395–valine 417, valine 419–alanine 441, and valine 450–methionine 470. One can recognise an EamA domain in the interval leucine 261–tyrosine 321.

The protein belongs to the SLC35F solute transporter family.

It localises to the membrane. Its function is as follows. Putative solute transporter. In Homo sapiens (Human), this protein is Solute carrier family 35 member F4 (SLC35F4).